The sequence spans 418 residues: Putative ion-transport protein YfeO (418 aa).

Helical transmembrane passes span 15–37 (PAVA…ASVL), 57–79 (LWII…FSQG), 99–118 (ALPR…VSLG), 149–171 (ILAS…LIFS), 186–208 (LFAP…HPHF), 221–243 (TDIL…AVWC), 258–280 (VLVL…PVSL), 301–323 (YFLL…FRGG), 343–363 (VPAV…VLVV), and 376–398 (VVVP…WLLL).

It belongs to the chloride channel (TC 2.A.49) family.

The protein resides in the cell membrane. This Shigella flexneri protein is Putative ion-transport protein YfeO (yfeO).